The sequence spans 176 residues: Large ribosomal subunit protein uL6 (176 aa).

The span at 151–170 (RPPEPYKGKGVRYADEQVRR) shows a compositional bias: basic and acidic residues. The disordered stretch occupies residues 151-176 (RPPEPYKGKGVRYADEQVRRKEAKKK).

The protein belongs to the universal ribosomal protein uL6 family. Part of the 50S ribosomal subunit.

In terms of biological role, this protein binds to the 23S rRNA, and is important in its secondary structure. It is located near the subunit interface in the base of the L7/L12 stalk, and near the tRNA binding site of the peptidyltransferase center. This Shewanella halifaxensis (strain HAW-EB4) protein is Large ribosomal subunit protein uL6.